Here is a 340-residue protein sequence, read N- to C-terminus: Anthranilate phosphoribosyltransferase (340 aa).

5-phospho-alpha-D-ribose 1-diphosphate is bound by residues Gly81, 84–85, Thr89, 91–94, 109–117, and Ser121; these read GD, NIST, and KHGNRGATS. Gly81 contributes to the anthranilate binding site. Ser93 contacts Mg(2+). Anthranilate is bound at residue Asn112. An anthranilate-binding site is contributed by Arg167. Mg(2+) contacts are provided by Asp225 and Glu226.

Belongs to the anthranilate phosphoribosyltransferase family. Homodimer. Requires Mg(2+) as cofactor.

It catalyses the reaction N-(5-phospho-beta-D-ribosyl)anthranilate + diphosphate = 5-phospho-alpha-D-ribose 1-diphosphate + anthranilate. Its pathway is amino-acid biosynthesis; L-tryptophan biosynthesis; L-tryptophan from chorismate: step 2/5. Catalyzes the transfer of the phosphoribosyl group of 5-phosphorylribose-1-pyrophosphate (PRPP) to anthranilate to yield N-(5'-phosphoribosyl)-anthranilate (PRA). In Methanocorpusculum labreanum (strain ATCC 43576 / DSM 4855 / Z), this protein is Anthranilate phosphoribosyltransferase.